The chain runs to 671 residues: MKQIEQYIEQLRQQLRYWNFLYYAKDAPEVSDVEYDWLMMKLRELERQWPDLKTADSPTQHIGYKAQSKFRKVIHEVPMLSLDHIFNDTSFLAFDRRIRNRLQYGNNYLTYCCELKFDGIAVSLLYKHGKLIRAATRGDGHIGEDVTDNIRTICSIPLQLKDDGHIPRLIEIRGEVIMSEDAFRHLNETAKKNKSKRFANPRNAAAGSLRQVDPSITATRLLSFFCYGVGRIDSKKIPAAHLELLQQFKIWGLPVSNYRRYCVGHQEVLDFYSYVSKVRSKLGFNIDGIVIKVNALVQQQQLGFVARAPRWAIAYKLPANEQLTEIQNIDFQVGRTGIITPVARLKPVYISGAYISNASLHSFAEIKRLGLRIGDTVVIRLAGNIIPQIVNVVVSKRSIKTSPVLYPLYCPVCGSKVKQNNKEKTIICTAGMICSAQLKEALKHFVSRRAMNIYGMGGKIIDQLVDLKIIQNPVDLFRLNQDQLTCLKNMGQKKTKKLLDAIEYAKKTTFARFLYAIGIREIGETKAAYLADYYKHIDALMAADIESLTKIQDIGIIVATNVLNFFHNKHNIAIIEELCSPKIGIKFLSTLEKNNYFSGKNIVFTGTLAFLSREEAIDMLIALGARIRSSVSSKIDLLIAGKNTGFKLTKAKQLQIKIIEEAEFYQILGIR.

NAD(+)-binding positions include 32-36 (DVEYD), 81-82 (SL), and Glu114. Catalysis depends on Lys116, which acts as the N6-AMP-lysine intermediate. Positions 137, 175, 292, and 316 each coordinate NAD(+). 4 residues coordinate Zn(2+): Cys410, Cys413, Cys428, and Cys434. In terms of domain architecture, BRCT spans 592–671 (EKNNYFSGKN…AEFYQILGIR (80 aa)).

Belongs to the NAD-dependent DNA ligase family. LigA subfamily. Requires Mg(2+) as cofactor. The cofactor is Mn(2+).

The catalysed reaction is NAD(+) + (deoxyribonucleotide)n-3'-hydroxyl + 5'-phospho-(deoxyribonucleotide)m = (deoxyribonucleotide)n+m + AMP + beta-nicotinamide D-nucleotide.. Its function is as follows. DNA ligase that catalyzes the formation of phosphodiester linkages between 5'-phosphoryl and 3'-hydroxyl groups in double-stranded DNA using NAD as a coenzyme and as the energy source for the reaction. It is essential for DNA replication and repair of damaged DNA. The chain is DNA ligase from Baumannia cicadellinicola subsp. Homalodisca coagulata.